A 224-amino-acid chain; its full sequence is Metalloproteinase inhibitor 4 (224 aa).

The N-terminal stretch at 1-29 (MPQSPRPVPSWALLLRLLALLRPPGLGEA) is a signal peptide. Cysteine 30 is a Zn(2+) binding site. Involved in metalloproteinase-binding stretches follow at residues 30–33 (CSCA) and 99–100 (SS). 6 disulfide bridges follow: cysteine 30–cysteine 102, cysteine 32–cysteine 131, cysteine 42–cysteine 156, cysteine 158–cysteine 205, cysteine 163–cysteine 168, and cysteine 176–cysteine 197. In terms of domain architecture, NTR spans 30–156 (CSCAPAHPQQ…SLNHHYHLNC (127 aa)).

The protein belongs to the protease inhibitor I35 (TIMP) family.

It localises to the secreted. Its function is as follows. Complexes with metalloproteinases (such as collagenases) and irreversibly inactivates them by binding to their catalytic zinc cofactor. The polypeptide is Metalloproteinase inhibitor 4 (TIMP4) (Bos taurus (Bovine)).